We begin with the raw amino-acid sequence, 459 residues long: Uterine milk protein (459 aa).

The N-terminal stretch at 1-25 (MSHGRMNLALSLVFILCGLFNSIFC) is a signal peptide. An N-linked (GlcNAc...) asparagine glycan is attached at N268.

This sequence belongs to the serpin family. UTMP subfamily.

This is Uterine milk protein from Bos taurus (Bovine).